A 330-amino-acid chain; its full sequence is uncharacterized protein (330 aa).

The JmjC domain maps to 96-256 (AALEFDFTDL…LMLAALRKKL (161 aa)). The Fe cation site is built by His-145, Asp-147, and His-224.

The protein belongs to the ROX family. Fe(2+) serves as cofactor.

This is an uncharacterized protein from Bacillus subtilis (strain 168).